Consider the following 444-residue polypeptide: Ribosomal protein uS12 methylthiotransferase RimO (444 aa).

Residues 4-120 (KSAALVSLGC…LKSFIRDHEA (117 aa)) enclose the MTTase N-terminal domain. Residues Cys13, Cys49, Cys83, Cys157, Cys161, and Cys164 each coordinate [4Fe-4S] cluster. Residues 143 to 371 (VEGRSSAYVK…LELQRGISRR (229 aa)) enclose the Radical SAM core domain. A TRAM domain is found at 374 to 442 (ESLVGRVLPV…DYDVEAELLS (69 aa)).

The protein belongs to the methylthiotransferase family. RimO subfamily. [4Fe-4S] cluster is required as a cofactor.

Its subcellular location is the cytoplasm. It catalyses the reaction L-aspartate(89)-[ribosomal protein uS12]-hydrogen + (sulfur carrier)-SH + AH2 + 2 S-adenosyl-L-methionine = 3-methylsulfanyl-L-aspartate(89)-[ribosomal protein uS12]-hydrogen + (sulfur carrier)-H + 5'-deoxyadenosine + L-methionine + A + S-adenosyl-L-homocysteine + 2 H(+). Functionally, catalyzes the methylthiolation of an aspartic acid residue of ribosomal protein uS12. The sequence is that of Ribosomal protein uS12 methylthiotransferase RimO from Syntrophobacter fumaroxidans (strain DSM 10017 / MPOB).